Consider the following 320-residue polypeptide: Cytochrome f (320 aa).

Positions 1-35 are cleaved as a signal peptide; it reads MQNRNTFSWVKEQMTRFISVSIMIYVITRTSISNA. Residues Tyr36, Cys56, Cys59, and His60 each contribute to the heme site. Residues 286–306 traverse the membrane as a helical segment; the sequence is VQGLLFFLASVILAQIFLVLK.

The protein belongs to the cytochrome f family. As to quaternary structure, the 4 large subunits of the cytochrome b6-f complex are cytochrome b6, subunit IV (17 kDa polypeptide, petD), cytochrome f and the Rieske protein, while the 4 small subunits are PetG, PetL, PetM and PetN. The complex functions as a dimer. Requires heme as cofactor.

It localises to the plastid. Its subcellular location is the chloroplast thylakoid membrane. Its function is as follows. Component of the cytochrome b6-f complex, which mediates electron transfer between photosystem II (PSII) and photosystem I (PSI), cyclic electron flow around PSI, and state transitions. The protein is Cytochrome f of Drimys granadensis.